A 757-amino-acid polypeptide reads, in one-letter code: Polyribonucleotide nucleotidyltransferase (757 aa).

Mg(2+) is bound by residues D532 and D538. Residues 598 to 657 (PRVTAIKVPVDKIGEVIGPKGKMINSITEQTGANISIEDDGTVFVGATDGPSAQAAIDMI) enclose the KH domain. The region spanning 669 to 738 (GERFLGTVVK…NRGKISLIPV (70 aa)) is the S1 motif domain.

The protein belongs to the polyribonucleotide nucleotidyltransferase family. Mg(2+) is required as a cofactor.

It is found in the cytoplasm. It carries out the reaction RNA(n+1) + phosphate = RNA(n) + a ribonucleoside 5'-diphosphate. Its function is as follows. Involved in mRNA degradation. Catalyzes the phosphorolysis of single-stranded polyribonucleotides processively in the 3'- to 5'-direction. This is Polyribonucleotide nucleotidyltransferase from Rhodococcus jostii (strain RHA1).